The following is a 120-amino-acid chain: Large ribosomal subunit protein bL19 (120 aa).

It belongs to the bacterial ribosomal protein bL19 family.

In terms of biological role, this protein is located at the 30S-50S ribosomal subunit interface and may play a role in the structure and function of the aminoacyl-tRNA binding site. The chain is Large ribosomal subunit protein bL19 from Dichelobacter nodosus (strain VCS1703A).